The chain runs to 375 residues: uncharacterized protein (375 aa).

Belongs to the IMPDH/GMPR family.

This is an uncharacterized protein from Mycobacterium leprae (strain TN).